A 296-amino-acid chain; its full sequence is Phosphoribosylaminoimidazole-succinocarboxamide synthase (296 aa).

Belongs to the SAICAR synthetase family.

It catalyses the reaction 5-amino-1-(5-phospho-D-ribosyl)imidazole-4-carboxylate + L-aspartate + ATP = (2S)-2-[5-amino-1-(5-phospho-beta-D-ribosyl)imidazole-4-carboxamido]succinate + ADP + phosphate + 2 H(+). It functions in the pathway purine metabolism; IMP biosynthesis via de novo pathway; 5-amino-1-(5-phospho-D-ribosyl)imidazole-4-carboxamide from 5-amino-1-(5-phospho-D-ribosyl)imidazole-4-carboxylate: step 1/2. This is Phosphoribosylaminoimidazole-succinocarboxamide synthase from Geotalea uraniireducens (strain Rf4) (Geobacter uraniireducens).